We begin with the raw amino-acid sequence, 359 residues long: Protein trichome birefringence-like 42 (359 aa).

A helical; Signal-anchor for type II membrane protein membrane pass occupies residues 7 to 25 (LFLLLLIFLVDLSDYGVLA). The short motif at 110-112 (GDS) is the GDS motif element. The short motif at 335 to 349 (DCSHWCLPGVPDAWN) is the DCXHWCLPGXXDXWN motif element.

The protein belongs to the PC-esterase family. TBL subfamily.

Its subcellular location is the membrane. In terms of biological role, may act as a bridging protein that binds pectin and other cell wall polysaccharides. Probably involved in maintaining esterification of pectins. May be involved in the specific O-acetylation of cell wall polymers. This Arabidopsis thaliana (Mouse-ear cress) protein is Protein trichome birefringence-like 42 (TBL42).